Consider the following 334-residue polypeptide: Cyclin N-terminal domain-containing protein 1 (334 aa).

The Cyclin N-terminal domain occupies 29–180; that stretch reads NALLHLAQQN…ILKSLNFQIN (152 aa).

As to quaternary structure, interacts with PRR19; this interaction promotes crossover formation. Interacts with RFC3 and RFC4; these interactions facilitate crossover formation. Interacts with CDC34; this interaction regulates the cell-cycle progression. In terms of tissue distribution, isoform 2 is expressed in spermatocyte.

It localises to the nucleus. The protein localises to the cytoplasm. It is found in the chromosome. Plays a role in the different steps of crossover formation during meiotic recombination. Participates in the crossover differentiation step of crossover-specific recombination intermediates through its interaction with PRR19. In addition, stimulates crossover formation through the interactions with RFC3 and RFC4 and simultaneously regulates cell-cycle progression through interactions with CDC34 and subsequent ubiquitination of WEE1. May also participates in an active deselection process that destabilizes or removes excess pre-CO intermediates. The chain is Cyclin N-terminal domain-containing protein 1 from Mus musculus (Mouse).